A 267-amino-acid polypeptide reads, in one-letter code: Glutamate racemase (267 aa).

Residues 10–11 (DS) and 42–43 (YG) contribute to the substrate site. Catalysis depends on Cys-73, which acts as the Proton donor/acceptor. A substrate-binding site is contributed by 74-75 (NT). Cys-183 (proton donor/acceptor) is an active-site residue. Substrate is bound at residue 184–185 (TH).

It belongs to the aspartate/glutamate racemases family.

The catalysed reaction is L-glutamate = D-glutamate. It functions in the pathway cell wall biogenesis; peptidoglycan biosynthesis. In terms of biological role, provides the (R)-glutamate required for cell wall biosynthesis. The chain is Glutamate racemase from Lactobacillus helveticus (strain DPC 4571).